The sequence spans 171 residues: UPF0398 protein SPy_1647/M5005_Spy1353 (171 aa).

Belongs to the UPF0398 family.

The polypeptide is UPF0398 protein SPy_1647/M5005_Spy1353 (Streptococcus pyogenes serotype M1).